Consider the following 481-residue polypeptide: Tryptophan 5-hydroxylase (481 aa).

Positions Ser-56–Asn-131 constitute an ACT domain. Tyr-272, Arg-294, and Thr-302 together coordinate L-tryptophan. Fe cation contacts are provided by His-309, His-314, and Glu-354. 2 residues coordinate L-tryptophan: Ser-373 and Ile-403.

This sequence belongs to the biopterin-dependent aromatic amino acid hydroxylase family. As to quaternary structure, homotetramer. It depends on Fe(2+) as a cofactor.

It carries out the reaction (6R)-L-erythro-5,6,7,8-tetrahydrobiopterin + L-tryptophan + O2 = 5-hydroxy-L-tryptophan + (4aS,6R)-4a-hydroxy-L-erythro-5,6,7,8-tetrahydrobiopterin. Its pathway is aromatic compound metabolism; serotonin biosynthesis; serotonin from L-tryptophan: step 1/2. Functionally, oxidizes L-tryptophan to 5-hydroxy-l-tryptophan in the rate-determining step of serotonin biosynthesis. The chain is Tryptophan 5-hydroxylase (tph1) from Xenopus laevis (African clawed frog).